Here is a 1128-residue protein sequence, read N- to C-terminus: Apoptosis-stimulating of p53 protein 2 (1128 aa).

A disordered region spans residues 85 to 120 (PPNRDIVSGPRSQDPSVKRNGVKVPGEHRRKENGVN). The tract at residues 332-348 (NLPQQAVSAPSRVAAVG) is interaction with APPBP1. The disordered stretch occupies residues 393–436 (MRSGAASQSKGSKAHPASPDWNPSNADLLPSQGSSVPQSAGTAL). A compositionally biased stretch (polar residues) spans 413–433 (WNPSNADLLPSQGSSVPQSAG). 5 positions are modified to phosphoserine: Ser-479, Ser-555, Ser-568, Ser-571, and Ser-575. Disordered regions lie at residues 549–596 (QARM…FPPA) and 654–705 (NPQQ…LPFL). The span at 562–574 (GQDQVLSPASKQE) shows a compositional bias: polar residues. Residues 654 to 669 (NPQQHPENIYSCSQGK) show a composition bias toward polar residues. Positions 684–693 (HESHENERIP) are enriched in basic and acidic residues. Phosphoserine is present on residues Ser-697, Ser-713, and Ser-736. Disordered regions lie at residues 723-748 (KLSNAPRPLKKRSSITEPEGPNGPNI), 802-824 (SLVPEPLSPEDMGSASTENSDVP), and 870-907 (PPPPYPSGEPEVSEEDSARMRPPEITGQVSLPPGKRTN). The short motif at 866 to 875 (YPPYPPPPYP) is the SH3-binding element. Positions 876 to 1128 (SGEPEVSEED…RIKPRQRSLA (253 aa)) are mediates interaction with APC2. ANK repeat units lie at residues 958–987 (EGITALHNAVCAGHTEIVKFLVQFGVNVNA) and 991–1020 (DGWTPLHCAASCNNVQVCKFLVESGAAVFA). The SH3 domain maps to 1057-1119 (MNKGVIYALW…PRNLLGLYPR (63 aa)).

Belongs to the ASPP family. Interacts with P53/TP53; the interaction promotes pro-apoptotic activity. Interacts with BCL2. Interacts with protein phosphatase 1. Interacts with RELA NF-kappa-B subunit. This interaction probably prevents the activation of apoptosis, possibly by preventing its interaction with p53/TP53. Interacts with APC2 and APPBP1. Interacts with DDX42 (via the C-terminus); the interaction is not inhibited by TP53BP2 ubiquitination and is independent of p53/TP53.

It localises to the cytoplasm. Its subcellular location is the perinuclear region. The protein resides in the nucleus. Its function is as follows. Regulator that plays a central role in regulation of apoptosis and cell growth via its interactions with proteins such as TP53. Regulates p53/TP53 by enhancing the DNA binding and transactivation function of p53/TP53 on the promoters of proapoptotic genes in vivo. Inhibits the ability of APPBP1 to conjugate NEDD8 to CUL1, and thereby decreases APPBP1 ability to induce apoptosis. Impedes cell cycle progression at G2/M. Its apoptosis-stimulating activity is inhibited by its interaction with DDX42. This Mus musculus (Mouse) protein is Apoptosis-stimulating of p53 protein 2 (Tp53bp2).